The chain runs to 157 residues: MGIFTFEDESTTTVAPARLYKALVKDADTIIPKAVEAIQSVEIVEGNGGPGTIKKLTLIEGGETKYVLHKIEAIDEANFGYNYSIVGGIGLPDTIEKISFETKLFEGANGGSIGKVTIKIETKGDAQPNEEEGKAAKARGDAFFKAIENYLIAHPEY.

D8 contributes to the trans-zeatin binding site. Positions 32, 35, and 38 each coordinate Ca(2+). 4 residues coordinate trans-zeatin: E60, H69, Y81, and Y83.

The protein belongs to the BetVI family.

It is found in the cytoplasm. It localises to the cytosol. Its function is as follows. Class II ribonuclease (RNase). Binds to cytokinins. Interacts with melatonin. This is Class 10 plant pathogenesis-related protein 2E from Lupinus luteus (European yellow lupine).